The primary structure comprises 1328 residues: Protein turtle homolog B (1328 aa).

The N-terminal stretch at Met-1 to Gly-17 is a signal peptide. Over Leu-18–Pro-722 the chain is Extracellular. 5 Ig-like domains span residues Pro-30–Val-115, Pro-139–Gln-226, Pro-228–Thr-320, Pro-324–Val-415, and Pro-420–Thr-504. 2 disulfide bridges follow: Cys-45-Cys-113 and Cys-161-Cys-208. N-linked (GlcNAc...) asparagine glycans are attached at residues Asn-241 and Asn-258. 3 disulfide bridges follow: Cys-250–Cys-303, Cys-346–Cys-397, and Cys-442–Cys-488. Fibronectin type-III domains lie at Ala-512–Phe-604 and Leu-614–Ile-708. The N-linked (GlcNAc...) asparagine glycan is linked to Asn-624. Residues Val-723–Leu-743 form a helical membrane-spanning segment. Over Ala-744–Gly-1328 the chain is Cytoplasmic. Disordered stretches follow at residues Arg-758 to Leu-817, Pro-914 to Trp-1040, and Lys-1106 to Gly-1328. 3 positions are modified to phosphoserine: Ser-775, Ser-783, and Ser-794. Over residues Ser-990–Leu-1001 the composition is skewed to low complexity. Composition is skewed to polar residues over residues Glu-1018–Gly-1033, Leu-1129–Gly-1141, and Ser-1199–Gly-1214. Arg-1136 carries the post-translational modification Omega-N-methylarginine. Ser-1207 and Ser-1215 each carry phosphoserine. Over residues Ser-1246 to Thr-1273 the composition is skewed to low complexity. 2 stretches are compositionally biased toward pro residues: residues Pro-1284–Pro-1295 and Pro-1318–Gly-1328.

It belongs to the immunoglobulin superfamily. Turtle family. In terms of assembly, found in a complex with MAGI2 and NLGN2, where it interacts with MAGI2 (via PDZ 5 and PDZ 6 domains). N-glycosylated and sialylated. Not significantly O-glycosylated. As to expression, detected in brain.

The protein localises to the cell membrane. The protein resides in the postsynaptic cell membrane. It localises to the postsynaptic density. Functionally, transmembrane protein which is abundantly expressed in interneurons, where it may regulate inhibitory synapse development. May mediate homophilic cell adhesion. The polypeptide is Protein turtle homolog B (Mus musculus (Mouse)).